The sequence spans 94 residues: ATP synthase subunit c (94 aa).

2 helical membrane passes run 15–35 and 58–78; these read IGVG…WGLI and FIFA…AMWF.

The protein belongs to the ATPase C chain family. F-type ATPases have 2 components, F(1) - the catalytic core - and F(0) - the membrane proton channel. F(1) has five subunits: alpha(3), beta(3), gamma(1), delta(1), epsilon(1). F(0) has three main subunits: a(1), b(2) and c(10-14). The alpha and beta chains form an alternating ring which encloses part of the gamma chain. F(1) is attached to F(0) by a central stalk formed by the gamma and epsilon chains, while a peripheral stalk is formed by the delta and b chains.

The protein resides in the cell inner membrane. Functionally, f(1)F(0) ATP synthase produces ATP from ADP in the presence of a proton or sodium gradient. F-type ATPases consist of two structural domains, F(1) containing the extramembraneous catalytic core and F(0) containing the membrane proton channel, linked together by a central stalk and a peripheral stalk. During catalysis, ATP synthesis in the catalytic domain of F(1) is coupled via a rotary mechanism of the central stalk subunits to proton translocation. In terms of biological role, key component of the F(0) channel; it plays a direct role in translocation across the membrane. A homomeric c-ring of between 10-14 subunits forms the central stalk rotor element with the F(1) delta and epsilon subunits. This chain is ATP synthase subunit c, found in Hydrogenovibrio crunogenus (strain DSM 25203 / XCL-2) (Thiomicrospira crunogena).